The sequence spans 151 residues: uncharacterized protein (151 aa).

Residues 40–57 (QMNRRNSENNTFDASNVG) are compositionally biased toward polar residues. Positions 40–125 (QMNRRNSENN…KRQPHYAEPI (86 aa)) are disordered. Low complexity predominate over residues 83-110 (QRQNGRQHQHAGQQQPQHQHTQSQTRQT).

This is an uncharacterized protein from Bacillus subtilis (strain 168).